We begin with the raw amino-acid sequence, 110 residues long: ATP-dependent Clp protease adapter protein ClpS 2 (110 aa).

The segment at 1–24 (MSNDENRSGSPTGPNTSVITKVKP) is disordered. Over residues 8 to 19 (SGSPTGPNTSVI) the composition is skewed to polar residues.

Belongs to the ClpS family. In terms of assembly, binds to the N-terminal domain of the chaperone ClpA.

In terms of biological role, involved in the modulation of the specificity of the ClpAP-mediated ATP-dependent protein degradation. The sequence is that of ATP-dependent Clp protease adapter protein ClpS 2 from Bradyrhizobium diazoefficiens (strain JCM 10833 / BCRC 13528 / IAM 13628 / NBRC 14792 / USDA 110).